The primary structure comprises 1382 residues: Hepatocyte growth factor receptor (1382 aa).

The first 24 residues, 1-24 (MKASAVLAPGILALLFTLVQGNDG), serve as a signal peptide directing secretion. The Extracellular portion of the chain corresponds to 25–933 (ECQEALAKSE…VIVQPDQNFT (909 aa)). In terms of domain architecture, Sema spans 27-516 (QEALAKSEMN…TGKKITKIPL (490 aa)). N-linked (GlcNAc...) asparagine glycosylation is found at Asn45, Asn100, and Asn106. Disulfide bonds link Cys95–Cys101, Cys98–Cys160, Cys133–Cys141, and Cys173–Cys176. Asn203 and Asn359 each carry an N-linked (GlcNAc...) asparagine glycan. 2 cysteine pairs are disulfide-bonded: Cys299-Cys364 and Cys386-Cys398. Asn400 and Asn406 each carry an N-linked (GlcNAc...) asparagine glycan. Disulfide bonds link Cys521/Cys539, Cys527/Cys562, Cys530/Cys546, and Cys542/Cys552. IPT/TIG domains lie at 564–656 (PAIH…FSYV), 658–740 (PVIT…FSYR), and 743–837 (PIVH…LIYV). O-linked (Man) threonine glycosylation is present at Thr583. N-linked (GlcNAc...) asparagine glycans are attached at residues Asn608 and Asn636. Thr677 and Thr762 each carry an O-linked (Man) threonine glycan. N-linked (GlcNAc...) asparagine glycans are attached at residues Asn786, Asn880, and Asn931. A helical membrane pass occupies residues 934-956 (GLIVGVVSISIILLLLLGLFLWM). The Cytoplasmic segment spans residues 957–1382 (KKRKQIKDLG…QDNVNGEVDT (426 aa)). Phosphoserine is present on Ser967. Thr978 bears the Phosphothreonine mark. Ser991, Ser998, and Ser1001 each carry phosphoserine. Tyr1004 carries the post-translational modification Phosphotyrosine. Residues 1079-1346 (VHFNEVIGRG…RISAIFSTFI (268 aa)) form the Protein kinase domain. Residues 1085-1093 (IGRGHFGCV) and Lys1111 contribute to the ATP site. The Proton acceptor role is filled by Asp1205. An interaction with RANBP9 region spans residues 1213–1382 (LDEKFTVKVA…QDNVNGEVDT (170 aa)). At Tyr1231 the chain carries Phosphotyrosine. Phosphotyrosine; by autocatalysis occurs at positions 1235 and 1236. Thr1290 carries the phosphothreonine modification. The interval 1321–1360 (WHPKAEMRPSFSELVSRISAIFSTFIGEHYVHVNATYVNV) is interaction with MUC20. Residues Tyr1350 and Tyr1357 each carry the phosphotyrosine; by autocatalysis modification. At Tyr1366 the chain carries Phosphotyrosine.

Belongs to the protein kinase superfamily. Tyr protein kinase family. In terms of assembly, heterodimer made of an alpha chain (50 kDa) and a beta chain (145 kDa) which are disulfide linked. Binds PLXNB1. Interacts when phosphorylated with downstream effectors including STAT3, PIK3R1, SRC, PCLG1, GRB2 and GAB1. Interacts with SPSB1, SPSB2 and SPSB4. Interacts with INPP5D/SHIP1. When phosphorylated at Tyr-1357, interacts with INPPL1/SHIP2. Interacts with RANBP9 and RANBP10, as well as SPSB1, SPSB2, SPSB3 and SPSB4. SPSB1 binding occurs in the presence and in the absence of HGF, however HGF treatment has a positive effect on this interaction. Interacts with MUC20; prevents interaction with GRB2 and suppresses hepatocyte growth factor-induced cell proliferation. Interacts with GRB10. Interacts with PTPN1 and PTPN2. Interacts with HSP90AA1 and HSP90AB1; the interaction suppresses MET kinase activity. Interacts with tensin TNS3. Interacts (when phosphorylated) with tensin TNS4 (via SH2 domain); the interaction increases MET protein stability by inhibiting MET endocytosis and subsequent lysosomal degradation. In terms of processing, autophosphorylated in response to ligand binding on Tyr-1235 and Tyr-1236 in the kinase domain leading to further phosphorylation of Tyr-1350 and Tyr-1357 in the C-terminal multifunctional docking site. Dephosphorylated by PTPRJ at Tyr-1350 and Tyr-1366. Dephosphorylated by PTPN1 and PTPN2. Post-translationally, ubiquitinated. Ubiquitination by CBL regulates the receptor stability and activity through proteasomal degradation. O-mannosylation of IPT/TIG domains by TMEM260 is required for protein maturation. O-mannosylated residues are composed of single mannose glycans that are not elongated or modified.

The protein resides in the membrane. It carries out the reaction L-tyrosyl-[protein] + ATP = O-phospho-L-tyrosyl-[protein] + ADP + H(+). In its inactive state, the C-terminal tail interacts with the catalytic domain and inhibits the kinase activity. Upon ligand binding, the C-terminal tail is displaced and becomes phosphorylated, thus increasing the kinase activity. In terms of biological role, receptor tyrosine kinase that transduces signals from the extracellular matrix into the cytoplasm by binding to hepatocyte growth factor/HGF ligand. Regulates many physiological processes including proliferation, scattering, morphogenesis and survival. Ligand binding at the cell surface induces autophosphorylation of MET on its intracellular domain that provides docking sites for downstream signaling molecules. Following activation by ligand, interacts with the PI3-kinase subunit PIK3R1, PLCG1, SRC, GRB2, STAT3 or the adapter GAB1. Recruitment of these downstream effectors by MET leads to the activation of several signaling cascades including the RAS-ERK, PI3 kinase-AKT, or PLCgamma-PKC. The RAS-ERK activation is associated with the morphogenetic effects while PI3K/AKT coordinates prosurvival effects. During embryonic development, MET signaling plays a role in gastrulation, development and migration of muscles and neuronal precursors, angiogenesis and kidney formation. In adults, participates in wound healing as well as organ regeneration and tissue remodeling. Also promotes differentiation and proliferation of hematopoietic cells. The sequence is that of Hepatocyte growth factor receptor (MET) from Eulemur macaco macaco (Black lemur).